Reading from the N-terminus, the 416-residue chain is Multifunctional CCA protein (416 aa).

Gly8 and Arg11 together coordinate ATP. Gly8 and Arg11 together coordinate CTP. Mg(2+) is bound by residues Asp21 and Asp23. ATP is bound by residues Arg91, Arg137, and Arg140. Residues Arg91, Arg137, and Arg140 each contribute to the CTP site. One can recognise an HD domain in the interval 228 to 329 (TGLHTMMVLA…IKLFDKADFW (102 aa)).

This sequence belongs to the tRNA nucleotidyltransferase/poly(A) polymerase family. Bacterial CCA-adding enzyme type 1 subfamily. In terms of assembly, monomer. Can also form homodimers and oligomers. Mg(2+) serves as cofactor. The cofactor is Ni(2+).

The enzyme catalyses a tRNA precursor + 2 CTP + ATP = a tRNA with a 3' CCA end + 3 diphosphate. It carries out the reaction a tRNA with a 3' CCA end + 2 CTP + ATP = a tRNA with a 3' CCACCA end + 3 diphosphate. In terms of biological role, catalyzes the addition and repair of the essential 3'-terminal CCA sequence in tRNAs without using a nucleic acid template. Adds these three nucleotides in the order of C, C, and A to the tRNA nucleotide-73, using CTP and ATP as substrates and producing inorganic pyrophosphate. tRNA 3'-terminal CCA addition is required both for tRNA processing and repair. Also involved in tRNA surveillance by mediating tandem CCA addition to generate a CCACCA at the 3' terminus of unstable tRNAs. While stable tRNAs receive only 3'-terminal CCA, unstable tRNAs are marked with CCACCA and rapidly degraded. This Shewanella sp. (strain MR-7) protein is Multifunctional CCA protein.